Consider the following 193-residue polypeptide: Segregation and condensation protein B (193 aa).

This sequence belongs to the ScpB family. As to quaternary structure, homodimer. Homodimerization may be required to stabilize the binding of ScpA to the Smc head domains. Component of a cohesin-like complex composed of ScpA, ScpB and the Smc homodimer, in which ScpA and ScpB bind to the head domain of Smc. The presence of the three proteins is required for the association of the complex with DNA.

The protein resides in the cytoplasm. Functionally, participates in chromosomal partition during cell division. May act via the formation of a condensin-like complex containing Smc and ScpA that pull DNA away from mid-cell into both cell halves. This chain is Segregation and condensation protein B, found in Clostridium botulinum (strain ATCC 19397 / Type A).